We begin with the raw amino-acid sequence, 312 residues long: Atrochrysone carboxyl ACP thioesterase AacuM (312 aa).

Residues His-103, His-105, Asp-107, and His-108 each coordinate Zn(2+). Asp-107 functions as the Proton donor/acceptor in the catalytic mechanism.

It belongs to the metallo-beta-lactamase superfamily. Requires Zn(2+) as cofactor.

The enzyme catalyses atrochrysone carboxyl-[ACP] + H2O = atrochrysone carboxylate + holo-[ACP] + H(+). It functions in the pathway secondary metabolite biosynthesis. Its function is as follows. Atrochrysone carboxyl ACP thioesterase; part of the gene cluster that mediates the biosynthesis of the tetrahydroxanthone dimer secalonic acid D. The pathway begins with the synthesis of atrochrysone thioester by the polyketide synthase AacuL. The atrochrysone carboxyl ACP thioesterase AacuM then breaks the thioester bond and releases the atrochrysone carboxylic acid from AacuL. Atrochrysone carboxylic acid is decarboxylated by the decarboxylase AacuI, and oxidized by the anthrone oxygenase AacuG to yield emodin. Emodin is then reduced to emodin hydroquinone by a yet unidentified oxidoreductase. A-ring reduction by the short chain dehydrogenase AacuN, dehydration by the scytalone dehydratase-like protein AacuK and probable spontaneous re-oxidation, results in overall deoxygenation to chrysophanol. Baeyer-Villiger oxidation by the Baeyer-Villiger monooxygenase (BVMO) AacuH then yields monodictyphenone. Monodictyphenone is transformed into compounds with the tetrahydroxanthone skeleton via methylesterification by the methyltransferase AacuQ, followed by the action of the flavin-dependent monooxygenase AacuC, the isomerase AacuP, and the short chain dehydrogenase/reductase AacuF or AacuD. AacuF and AacuD should accept the same compound as a substrate but perform the ketoreduction with a different stereoselectivity, thus yielding blennolides B and A, respectively. In the final step of the biosynthesis, the cytochrome P450 monooxygenase AacuE accepts blennolide B and/or blennolide A to conduct the dimerization reaction to furnish the tetrahydroxanthone dimers, secalonic acids D, B, and F. The polypeptide is Atrochrysone carboxyl ACP thioesterase AacuM (Aspergillus aculeatus (strain ATCC 16872 / CBS 172.66 / WB 5094)).